Reading from the N-terminus, the 346-residue chain is uncharacterized protein (346 aa).

Belongs to the PhyH family.

Its subcellular location is the cytoplasm. This is an uncharacterized protein from Saccharomyces cerevisiae (strain ATCC 204508 / S288c) (Baker's yeast).